Reading from the N-terminus, the 299-residue chain is MAANSTRRPIIAFMSDLGTTDDSVAQCKGLMYSICPDVTVVDVCHSMTPWDVEEGARYIVDLPRFFPEGTVFATTTYPATGTTTRSVAVRIKQAAKGGARGQWAGSGAGFERAEGSYIYIAPNNGLLTTVLEEHGYLEAYEVTSPKVIPEQPEPTFYSREMVAIPSAHLAAGFPLSEVGRPLEDHEIVRFNRPAVEQDGEALVGVVSAIDHPFGNVWTNIHRTDLEKAGIGYGARLRLTLDGVLPFEAPLTPTFADAGEIGNIAIYLNSRGYLSIARNAASLAYPYHLKEGMSARVEAR.

S-adenosyl-L-methionine-binding positions include Asp16, 21–23 (DDS), Tyr77, Ser158, Asp210, Asn215, 269–270 (SR), and 277–279 (RNA).

In terms of assembly, homohexamer; dimers of trimer.

The catalysed reaction is fluoride + S-adenosyl-L-methionine = 5'-deoxy-5'-fluoroadenosine + L-methionine. Competitively inhibited by S-adenosyl-L-homocysteine (AdoHcy) and S-adenosyl-L-homocysteine (SAH). Sinefungin is only weakly inhibitory. Its function is as follows. Involved in the biosynthesis of fluorometabolites. Catalyzes the formation of a C-F bond by combining S-adenosyl-L-methionine (SAM) and fluoride to generate 5'-fluoro-5'-deoxyadenosine (5'-FDA) and L-methionine. It can also use 2'-deoxyadenosine in place of adenosine as substrate. This chain is Fluorinase, found in Streptantibioticus cattleyicolor (Streptomyces cattleya).